A 369-amino-acid polypeptide reads, in one-letter code: Anhydro-N-acetylmuramic acid kinase (369 aa).

An ATP-binding site is contributed by G12–D19.

The protein belongs to the anhydro-N-acetylmuramic acid kinase family.

The enzyme catalyses 1,6-anhydro-N-acetyl-beta-muramate + ATP + H2O = N-acetyl-D-muramate 6-phosphate + ADP + H(+). It functions in the pathway amino-sugar metabolism; 1,6-anhydro-N-acetylmuramate degradation. It participates in cell wall biogenesis; peptidoglycan recycling. In terms of biological role, catalyzes the specific phosphorylation of 1,6-anhydro-N-acetylmuramic acid (anhMurNAc) with the simultaneous cleavage of the 1,6-anhydro ring, generating MurNAc-6-P. Is required for the utilization of anhMurNAc either imported from the medium or derived from its own cell wall murein, and thus plays a role in cell wall recycling. The polypeptide is Anhydro-N-acetylmuramic acid kinase (Shigella flexneri).